The chain runs to 388 residues: Gastricsin (388 aa).

The first 16 residues, Met-1–Ala-16, serve as a signal peptide directing secretion. Positions Thr-17–Leu-59 are cleaved as a propeptide — activation peptide. The 313-residue stretch at Tyr-73–Ala-385 folds into the Peptidase A1 domain. The active site involves Asp-91. 2 disulfide bridges follow: Cys-104–Cys-109 and Cys-267–Cys-271. Asp-276 is an active-site residue. Cys-310 and Cys-343 form a disulfide bridge.

It belongs to the peptidase A1 family.

The protein resides in the secreted. The catalysed reaction is More restricted specificity than pepsin A, but shows preferential cleavage at Tyr-|-Xaa bonds. High activity on hemoglobin.. Its activity is regulated as follows. Inhibited by pepstatin. Its function is as follows. Hydrolyzes a variety of proteins. The polypeptide is Gastricsin (PGC) (Callithrix jacchus (White-tufted-ear marmoset)).